We begin with the raw amino-acid sequence, 270 residues long: MKKEMIVYSVSDSLGGTSQKLLSAVTAQYPDIIFNNSYRFPFINKEEELLDILRDAIKDDALVISTLVDGKLASVAREFSQAHGLSYLDLMHPFFEIIKEKTGTDPIEVPGTLHRLDSEYFNKISAIEFAVKYDDGKAPQGFLDSDIVLLGVSRTSKTPLSIYLANKGYKVSNLPLIPEVPLPQVLEKVDSRRLIGLVCEPEKLAKIRSHRLDSLGLTQETSYTDLEKIYQELDYSKTVFKKYGAQIINMSDKSIEETAFLIEEHLKKLN.

Residue 151–158 (GVSRTSKT) coordinates ADP.

The protein belongs to the pyruvate, phosphate/water dikinase regulatory protein family. PDRP subfamily.

It carries out the reaction N(tele)-phospho-L-histidyl/L-threonyl-[pyruvate, phosphate dikinase] + ADP = N(tele)-phospho-L-histidyl/O-phospho-L-threonyl-[pyruvate, phosphate dikinase] + AMP + H(+). The catalysed reaction is N(tele)-phospho-L-histidyl/O-phospho-L-threonyl-[pyruvate, phosphate dikinase] + phosphate + H(+) = N(tele)-phospho-L-histidyl/L-threonyl-[pyruvate, phosphate dikinase] + diphosphate. Its function is as follows. Bifunctional serine/threonine kinase and phosphorylase involved in the regulation of the pyruvate, phosphate dikinase (PPDK) by catalyzing its phosphorylation/dephosphorylation. The polypeptide is Putative pyruvate, phosphate dikinase regulatory protein (Streptococcus gordonii (strain Challis / ATCC 35105 / BCRC 15272 / CH1 / DL1 / V288)).